Reading from the N-terminus, the 167-residue chain is NADH-quinone oxidoreductase subunit B (167 aa).

[4Fe-4S] cluster is bound by residues C40, C41, C105, and C134.

The protein belongs to the complex I 20 kDa subunit family. In terms of assembly, NDH-1 is composed of 14 different subunits. Subunits NuoB, C, D, E, F, and G constitute the peripheral sector of the complex. The cofactor is [4Fe-4S] cluster.

The protein localises to the cell inner membrane. The catalysed reaction is a quinone + NADH + 5 H(+)(in) = a quinol + NAD(+) + 4 H(+)(out). Functionally, NDH-1 shuttles electrons from NADH, via FMN and iron-sulfur (Fe-S) centers, to quinones in the respiratory chain. The immediate electron acceptor for the enzyme in this species is believed to be ubiquinone. Couples the redox reaction to proton translocation (for every two electrons transferred, four hydrogen ions are translocated across the cytoplasmic membrane), and thus conserves the redox energy in a proton gradient. The protein is NADH-quinone oxidoreductase subunit B of Campylobacter jejuni subsp. jejuni serotype O:2 (strain ATCC 700819 / NCTC 11168).